Here is a 443-residue protein sequence, read N- to C-terminus: Ribulose bisphosphate carboxylase large chain (443 aa).

The substrate site is built by N89 and T139. K141 serves as the catalytic Proton acceptor. K143 lines the substrate pocket. Residues K167, D169, and E170 each contribute to the Mg(2+) site. Residue K167 is modified to N6-carboxylysine. The Proton acceptor role is filled by H260. 3 residues coordinate substrate: R261, H293, and S345.

This sequence belongs to the RuBisCO large chain family. Type I subfamily. Heterohexadecamer of 8 large chains and 8 small chains; disulfide-linked. The disulfide link is formed within the large subunit homodimers. Requires Mg(2+) as cofactor. Post-translationally, the disulfide bond which can form in the large chain dimeric partners within the hexadecamer appears to be associated with oxidative stress and protein turnover.

The protein resides in the plastid. The protein localises to the chloroplast. It carries out the reaction 2 (2R)-3-phosphoglycerate + 2 H(+) = D-ribulose 1,5-bisphosphate + CO2 + H2O. The enzyme catalyses D-ribulose 1,5-bisphosphate + O2 = 2-phosphoglycolate + (2R)-3-phosphoglycerate + 2 H(+). In terms of biological role, ruBisCO catalyzes two reactions: the carboxylation of D-ribulose 1,5-bisphosphate, the primary event in carbon dioxide fixation, as well as the oxidative fragmentation of the pentose substrate in the photorespiration process. Both reactions occur simultaneously and in competition at the same active site. The sequence is that of Ribulose bisphosphate carboxylase large chain from Buddleja davidii (Butterfly bush).